A 101-amino-acid polypeptide reads, in one-letter code: Protein RnfH (101 aa).

The protein belongs to the UPF0125 (RnfH) family.

The sequence is that of Protein RnfH from Pseudomonas aeruginosa (strain UCBPP-PA14).